Here is a 309-residue protein sequence, read N- to C-terminus: Metal ABC transporter substrate-binding lipoprotein SsaB (309 aa).

The first 19 residues, 1 to 19 (MKKLGFLSLLLLAVCTLFA), serve as a signal peptide directing secretion. Cys-20 carries the N-palmitoyl cysteine lipid modification. Residue Cys-20 is the site of S-diacylglycerol cysteine attachment. A divalent metal cation is bound by residues His-67, His-139, Glu-205, and Asp-280.

Belongs to the bacterial solute-binding protein 9 family. Lipoprotein receptor antigen (Lrai) subfamily. Homodimer and homotrimer.

The protein localises to the cell membrane. Its function is as follows. Part of an ATP-binding cassette (ABC) transport system involved in metal import. Binds a metal with high affinity and specificity and delivers it to the membrane permease for translocation into the cytoplasm. Also acts as an adhesin which is involved on adherence to extracellular matrix. It is an important factor in the pathogenesis and infection. May contribute to the formation and accumulation of dental plaque. In Streptococcus sanguinis, this protein is Metal ABC transporter substrate-binding lipoprotein SsaB (ssaB).